The chain runs to 170 residues: Lipoprotein signal peptidase (170 aa).

The next 3 membrane-spanning stretches (helical) occupy residues 12–32 (WYWV…WVLA), 67–87 (WQRW…TVWL), and 93–113 (GLWR…GNLI). Catalysis depends on residues Asp-123 and Asp-141. Residues 133-153 (HFPAFNIADSAICVGAGLIIL) form a helical membrane-spanning segment.

This sequence belongs to the peptidase A8 family.

Its subcellular location is the cell inner membrane. The enzyme catalyses Release of signal peptides from bacterial membrane prolipoproteins. Hydrolyzes -Xaa-Yaa-Zaa-|-(S,diacylglyceryl)Cys-, in which Xaa is hydrophobic (preferably Leu), and Yaa (Ala or Ser) and Zaa (Gly or Ala) have small, neutral side chains.. It functions in the pathway protein modification; lipoprotein biosynthesis (signal peptide cleavage). This protein specifically catalyzes the removal of signal peptides from prolipoproteins. The chain is Lipoprotein signal peptidase from Shewanella loihica (strain ATCC BAA-1088 / PV-4).